Here is a 163-residue protein sequence, read N- to C-terminus: Phosphopantetheine adenylyltransferase (163 aa).

Thr10 is a substrate binding site. ATP is bound by residues 10–11 and His18; that span reads TF. Lys42, Leu74, and Arg88 together coordinate substrate. ATP contacts are provided by residues 89–91, Glu99, and 124–130; these read GLR and NSFISST.

It belongs to the bacterial CoaD family. As to quaternary structure, homohexamer. Requires Mg(2+) as cofactor.

It localises to the cytoplasm. It catalyses the reaction (R)-4'-phosphopantetheine + ATP + H(+) = 3'-dephospho-CoA + diphosphate. The protein operates within cofactor biosynthesis; coenzyme A biosynthesis; CoA from (R)-pantothenate: step 4/5. Reversibly transfers an adenylyl group from ATP to 4'-phosphopantetheine, yielding dephospho-CoA (dPCoA) and pyrophosphate. The sequence is that of Phosphopantetheine adenylyltransferase from Shewanella sp. (strain W3-18-1).